The sequence spans 39 residues: Gas vesicle protein C (39 aa).

This sequence belongs to the gas vesicle GvpC family.

It is found in the gas vesicle. Functionally, confers stability, involved in shaping gas vesicles, hollow, gas filled proteinaceous nanostructures. During planktonic growth they allow positioning of the organism at a favorable depth for light or nutrient acquisition. This chain is Gas vesicle protein C, found in Spirulina sp. (strain CCAP 1475/10).